Reading from the N-terminus, the 327-residue chain is tRNA dimethylallyltransferase (327 aa).

Position 14-21 (14-21 (GPTASGKT)) interacts with ATP. Position 16–21 (16–21 (TASGKT)) interacts with substrate. Interaction with substrate tRNA stretches follow at residues 39 to 42 (DSAL) and 163 to 167 (QRIQR).

This sequence belongs to the IPP transferase family. As to quaternary structure, monomer. Mg(2+) serves as cofactor.

It catalyses the reaction adenosine(37) in tRNA + dimethylallyl diphosphate = N(6)-dimethylallyladenosine(37) in tRNA + diphosphate. In terms of biological role, catalyzes the transfer of a dimethylallyl group onto the adenine at position 37 in tRNAs that read codons beginning with uridine, leading to the formation of N6-(dimethylallyl)adenosine (i(6)A). This chain is tRNA dimethylallyltransferase, found in Xanthomonas oryzae pv. oryzae (strain KACC10331 / KXO85).